A 209-amino-acid chain; its full sequence is Uracil phosphoribosyltransferase (209 aa).

Residues Arg-79, Arg-104, and 131–139 (DPMLATGVS) each bind 5-phospho-alpha-D-ribose 1-diphosphate. Residues Ile-194 and 199–201 (GDA) each bind uracil. 5-phospho-alpha-D-ribose 1-diphosphate is bound at residue Asp-200.

This sequence belongs to the UPRTase family. The cofactor is Mg(2+).

The catalysed reaction is UMP + diphosphate = 5-phospho-alpha-D-ribose 1-diphosphate + uracil. Its pathway is pyrimidine metabolism; UMP biosynthesis via salvage pathway; UMP from uracil: step 1/1. With respect to regulation, allosterically activated by GTP. In terms of biological role, catalyzes the conversion of uracil and 5-phospho-alpha-D-ribose 1-diphosphate (PRPP) to UMP and diphosphate. This chain is Uracil phosphoribosyltransferase, found in Thermotoga neapolitana (strain ATCC 49049 / DSM 4359 / NBRC 107923 / NS-E).